A 304-amino-acid polypeptide reads, in one-letter code: Cell surface-binding protein OPG105 (304 aa).

In terms of domain architecture, Alpha-carbonic anhydrase spans 1-235 (MPQQLSPINI…NDDTQVYYSG (235 aa)). Residues 1–275 (MPQQLSPINI…YQKYIEGNKT (275 aa)) are Virion surface-facing. A helical transmembrane segment spans residues 276 to 294 (FAIIAIVFVFILTAILFLM). The Intravirion segment spans residues 295–304 (SQRYSREKQN).

It belongs to the alpha-carbonic anhydrase family. As to quaternary structure, homodimer; disulfide-linked. In terms of processing, apparently non-glycosylated.

Its subcellular location is the virion membrane. Binds to chondroitin sulfate on the cell surface to provide virion attachment to target cell. This Monkeypox virus (strain Zaire-96-I-16) (MPX) protein is Cell surface-binding protein OPG105 (OPG105).